A 261-amino-acid chain; its full sequence is DNA repair protein RecO (261 aa).

It belongs to the RecO family.

Functionally, involved in DNA repair and RecF pathway recombination. This chain is DNA repair protein RecO, found in Pelodictyon phaeoclathratiforme (strain DSM 5477 / BU-1).